Consider the following 401-residue polypeptide: MSWQHFKQTWLIKFWAPAPAVIAAGILSTYYFGITGTFWAVTGEFTRWGGQILQLFGVHAEQWGYYKLIHLEGTPLTRIDGMMILGMFGGCFAAALWANNVKLRMPRSRIRIVQAVAGGIIAGFGARLAMGCNLAAFFTGIPQFSLHAWFFALATAIGSWFGARFTLLPIFRIPVKMQKVSAASPLTQKPDQARRRFRLGMLVFIGMIGWALLTAMHQPKLGLAMLFGVGFGLLIERAQICFTSAFRDLWISGRAHMAKAIIFGMAVSAIGIFSYVQLGVAPKIMWAGPNAVIGGLLFGFGIVLAGGCETGWMYRAVEGQVHYWWVGLGNVIGSTILAYYWDDFAPALATSWDKVNLLNTFGPLGGLLVTYLLLFTALMLIIGWEKRFFRRAGLTPAKESV.

The Cytoplasmic segment spans residues Met1–Lys13. Residues Phe14–Ile34 form a helical membrane-spanning segment. Residues Thr35–Arg78 lie on the Periplasmic side of the membrane. Residues Ile79 to Asn99 traverse the membrane as a helical segment. Topologically, residues Asn100 to Gly118 are cytoplasmic. The chain crosses the membrane as a helical span at residues Gly119 to Ile141. At Pro142–Ser145 the chain is on the periplasmic side. Residues Leu146–Leu168 traverse the membrane as a helical segment. Residues Pro169–Arg198 lie on the Cytoplasmic side of the membrane. Residues Leu199–Pro219 traverse the membrane as a helical segment. Residues Lys220–Leu221 lie on the Periplasmic side of the membrane. Residues Gly222–Phe242 form a helical membrane-spanning segment. Over Thr243 to Lys259 the chain is Cytoplasmic. A helical membrane pass occupies residues Ala260–Val280. Topologically, residues Ala281 to Lys283 are periplasmic. Residues Ile284–Leu304 form a helical membrane-spanning segment. At Ala305 to Gln320 the chain is on the cytoplasmic side. A helical transmembrane segment spans residues Val321–Trp341. The Periplasmic portion of the chain corresponds to Asp342–Pro363. The helical transmembrane segment at Leu364–Trp384 threads the bilayer. Residues Glu385–Val401 lie on the Cytoplasmic side of the membrane.

This sequence belongs to the TsuA/YedE (TC 9.B.102) family.

The protein localises to the cell inner membrane. The protein is Probable transporter YedE (yedE) of Salmonella typhimurium (strain LT2 / SGSC1412 / ATCC 700720).